A 104-amino-acid polypeptide reads, in one-letter code: uncharacterized protein (104 aa).

This is an uncharacterized protein from Dictyostelium discoideum (Social amoeba).